A 107-amino-acid chain; its full sequence is MTKSELVAQLASRFPQLVLKDADFAVKTMLDAMSDALSKGHRIEIRGFGSFGLNRRPARVGRNPKSGEKVQVPEKHVPHFKPGKELRERVDGRAGEPLKNDEPEDAQ.

Positions 55-107 are disordered; that stretch reads RRPARVGRNPKSGEKVQVPEKHVPHFKPGKELRERVDGRAGEPLKNDEPEDAQ. Positions 65–101 are enriched in basic and acidic residues; it reads KSGEKVQVPEKHVPHFKPGKELRERVDGRAGEPLKND.

It belongs to the bacterial histone-like protein family. In terms of assembly, heterodimer of an alpha and a beta chain.

This protein is one of the two subunits of integration host factor, a specific DNA-binding protein that functions in genetic recombination as well as in transcriptional and translational control. The chain is Integration host factor subunit beta from Burkholderia pseudomallei (strain K96243).